We begin with the raw amino-acid sequence, 72 residues long: Translation initiation factor IF-1 (72 aa).

The 72-residue stretch at 1 to 72 folds into the S1-like domain; it reads MSKEENIEMQ…TKGRIIFRSR (72 aa).

Belongs to the IF-1 family. As to quaternary structure, component of the 30S ribosomal translation pre-initiation complex which assembles on the 30S ribosome in the order IF-2 and IF-3, IF-1 and N-formylmethionyl-tRNA(fMet); mRNA recruitment can occur at any time during PIC assembly.

It localises to the cytoplasm. Its function is as follows. One of the essential components for the initiation of protein synthesis. Stabilizes the binding of IF-2 and IF-3 on the 30S subunit to which N-formylmethionyl-tRNA(fMet) subsequently binds. Helps modulate mRNA selection, yielding the 30S pre-initiation complex (PIC). Upon addition of the 50S ribosomal subunit IF-1, IF-2 and IF-3 are released leaving the mature 70S translation initiation complex. This chain is Translation initiation factor IF-1, found in Buchnera aphidicola subsp. Acyrthosiphon pisum (strain APS) (Acyrthosiphon pisum symbiotic bacterium).